A 441-amino-acid chain; its full sequence is Protein arginine methyltransferase NDUFAF7, mitochondrial (441 aa).

Residues 1–46 (MNFLAAAGVRRLCAMRAVLPCLWRGKYFSSGNEPAENNTVTPMLRH) constitute a mitochondrion transit peptide. The interval 415 to 434 (GRNHQTNARQSKPSPSPVAG) is disordered. Positions 418 to 427 (HQTNARQSKP) are enriched in polar residues.

Belongs to the NDUFAF7 family. As to quaternary structure, interacts with NDUFS2.

It localises to the mitochondrion. The enzyme catalyses L-arginyl-[protein] + 2 S-adenosyl-L-methionine = N(omega),N(omega)'-dimethyl-L-arginyl-[protein] + 2 S-adenosyl-L-homocysteine + 2 H(+). Arginine methyltransferase involved in the assembly or stability of mitochondrial NADH:ubiquinone oxidoreductase complex (complex I). Acts by mediating symmetric dimethylation of 'Arg-118' of NDUFS2 after it assembles into the complex I, stabilizing the early intermediate complex. The sequence is that of Protein arginine methyltransferase NDUFAF7, mitochondrial from Bos taurus (Bovine).